Consider the following 722-residue polypeptide: Ribosomal RNA large subunit methyltransferase K/L (722 aa).

In terms of domain architecture, THUMP spans 43–154; the sequence is IGLRACLWSR…GNEGRVGIDL (112 aa).

This sequence belongs to the methyltransferase superfamily. RlmKL family.

It localises to the cytoplasm. The enzyme catalyses guanosine(2445) in 23S rRNA + S-adenosyl-L-methionine = N(2)-methylguanosine(2445) in 23S rRNA + S-adenosyl-L-homocysteine + H(+). It carries out the reaction guanosine(2069) in 23S rRNA + S-adenosyl-L-methionine = N(2)-methylguanosine(2069) in 23S rRNA + S-adenosyl-L-homocysteine + H(+). In terms of biological role, specifically methylates the guanine in position 2445 (m2G2445) and the guanine in position 2069 (m7G2069) of 23S rRNA. The sequence is that of Ribosomal RNA large subunit methyltransferase K/L from Magnetococcus marinus (strain ATCC BAA-1437 / JCM 17883 / MC-1).